Reading from the N-terminus, the 266-residue chain is MNKPIGVIDSGVGGLTVAKEIMRQLPNETIYYLGDIGRCPYGPRPGEQVKQYTVEIARKLMGFDIKMLVIACNTATAVALEYLQKTLSIPVIGVIEPGARTAIMTTRNQNVLVLGTEGTIKSEAYRTHIKRINPHVEVHGVACPGFVPLVEQMRYSDPTITSIVIHQTLKRWRNSESDTVILGCTHYPLLYKPIYDYFGGKKTVISSGLETAREVSALLTFSNEHASYTEHPDHRFFATGDTTHITNIIKEWLNLSVNVERISVND.

Substrate-binding positions include 9–10 and 41–42; these read DS and YG. The active-site Proton donor/acceptor is Cys72. A substrate-binding site is contributed by 73–74; that stretch reads NT. Cys184 functions as the Proton donor/acceptor in the catalytic mechanism. Position 185–186 (185–186) interacts with substrate; sequence TH.

This sequence belongs to the aspartate/glutamate racemases family.

It carries out the reaction L-glutamate = D-glutamate. Its pathway is cell wall biogenesis; peptidoglycan biosynthesis. Provides the (R)-glutamate required for cell wall biosynthesis. The polypeptide is Glutamate racemase (Staphylococcus aureus (strain bovine RF122 / ET3-1)).